The primary structure comprises 328 residues: Malate dehydrogenase (328 aa).

NAD(+) is bound at residue G13–S19. Substrate-binding residues include R94 and R100. NAD(+)-binding positions include N107, Q114, and V131–N133. Residues N133 and R164 each coordinate substrate. The active-site Proton acceptor is H189.

This sequence belongs to the LDH/MDH superfamily. MDH type 2 family.

It carries out the reaction (S)-malate + NAD(+) = oxaloacetate + NADH + H(+). Functionally, catalyzes the reversible oxidation of malate to oxaloacetate. The polypeptide is Malate dehydrogenase (Alcanivorax borkumensis (strain ATCC 700651 / DSM 11573 / NCIMB 13689 / SK2)).